A 322-amino-acid polypeptide reads, in one-letter code: Acetyl-coenzyme A carboxylase carboxyl transferase subunit alpha 2 (322 aa).

Positions 37–294 constitute a CoA carboxyltransferase C-terminal domain; sequence EINRLSARSE…KRVLQESLRN (258 aa).

This sequence belongs to the AccA family. Acetyl-CoA carboxylase is a heterohexamer composed of biotin carboxyl carrier protein (AccB), biotin carboxylase (AccC) and two subunits each of ACCase subunit alpha (AccA) and ACCase subunit beta (AccD).

Its subcellular location is the cytoplasm. The catalysed reaction is N(6)-carboxybiotinyl-L-lysyl-[protein] + acetyl-CoA = N(6)-biotinyl-L-lysyl-[protein] + malonyl-CoA. The protein operates within lipid metabolism; malonyl-CoA biosynthesis; malonyl-CoA from acetyl-CoA: step 1/1. Its function is as follows. Component of the acetyl coenzyme A carboxylase (ACC) complex. First, biotin carboxylase catalyzes the carboxylation of biotin on its carrier protein (BCCP) and then the CO(2) group is transferred by the carboxyltransferase to acetyl-CoA to form malonyl-CoA. In terms of biological role, confers resistance to the endogenous polyketide antibiotic thailandamide. Can replace the endogenous gene in S.typhimurium, conferring slow growth and resistance to thailandamide. Can also replace the endogenous gene in E.coli, conferring resistance to thailandamide. The protein is Acetyl-coenzyme A carboxylase carboxyl transferase subunit alpha 2 of Burkholderia thailandensis (strain ATCC 700388 / DSM 13276 / CCUG 48851 / CIP 106301 / E264).